A 445-amino-acid chain; its full sequence is Chromosomal replication initiator protein DnaA (445 aa).

The interval 1-73 is domain I, interacts with DnaA modulators; sequence MSTHLTETWE…VNALKLLTSK (73 aa). The segment at 73 to 106 is domain II; sequence KKYNIDFIVTTEEKIEKNHNNEKSNIVVNDEMST. A domain III, AAA+ region region spans residues 107 to 323; the sequence is MLNPKYTFDS…GALIRIVAFS (217 aa). Residues Gly151, Gly153, Lys154, and Thr155 each contribute to the ATP site. Positions 324–445 are domain IV, binds dsDNA; that stretch reads SLTNKEISVD…NDLNKRINQK (122 aa).

It belongs to the DnaA family. In terms of assembly, oligomerizes as a right-handed, spiral filament on DNA at oriC.

The protein localises to the cytoplasm. Plays an essential role in the initiation and regulation of chromosomal replication. ATP-DnaA binds to the origin of replication (oriC) to initiate formation of the DNA replication initiation complex once per cell cycle. Binds the DnaA box (a 9 base pair repeat at the origin) and separates the double-stranded (ds)DNA. Forms a right-handed helical filament on oriC DNA; dsDNA binds to the exterior of the filament while single-stranded (ss)DNA is stabiized in the filament's interior. The ATP-DnaA-oriC complex binds and stabilizes one strand of the AT-rich DNA unwinding element (DUE), permitting loading of DNA polymerase. After initiation quickly degrades to an ADP-DnaA complex that is not apt for DNA replication. Binds acidic phospholipids. The chain is Chromosomal replication initiator protein DnaA from Clostridium botulinum (strain Loch Maree / Type A3).